Reading from the N-terminus, the 362-residue chain is Caveolae-associated protein 4 (362 aa).

Residues 1–24 (MEHNGSASNAGKIHQNRLSSVTED) are disordered. A coiled-coil region spans residues 100–120 (IKDVKARVEKQQVRVTKVETK). Phosphoserine is present on residues Ser-152, Ser-171, and Ser-172. Basic and acidic residues predominate over residues 227 to 255 (PERRERLRQSGERLRQSGERLRQSGERFK). The tract at residues 227–261 (PERRERLRQSGERLRQSGERLRQSGERFKKSISNA) is disordered. At Tyr-324 the chain carries Phosphotyrosine. Thr-334 carries the phosphothreonine modification. Residue Ser-353 is modified to Phosphoserine.

Belongs to the CAVIN family. As to quaternary structure, component of the CAVIN complex composed of CAVIN1, CAVIN2, CAVIN3 and CAVIN4. Interacts with CAVIN1, CAV3, ADRA1A and ADRA1B. Interacts with CAVIN2; this augments the transactivation of NPPA. Interacts with MAPK1 and MAPK3. As to expression, expressed at much higher levels in cardiomyocytes than in non-cardiomyocytes.

Its subcellular location is the cytoplasm. It is found in the myofibril. The protein resides in the sarcomere. The protein localises to the cytosol. It localises to the cell membrane. Its subcellular location is the sarcolemma. It is found in the membrane. The protein resides in the caveola. In terms of biological role, modulates the morphology of formed caveolae in cardiomyocytes, but is not required for caveolar formation. Facilitates the recruitment of MAPK1/3 to caveolae within cardiomyocytes and regulates alpha-1 adrenergic receptor-induced hypertrophic responses in cardiomyocytes through MAPK1/3 activation. Contributes to proper membrane localization and stabilization of caveolin-3 (CAV3) in cardiomyocytes. Induces RHOA activation and activates NPPA transcription and myofibrillar organization through the Rho/ROCK signaling pathway. This is Caveolae-associated protein 4 from Rattus norvegicus (Rat).